A 205-amino-acid chain; its full sequence is TATA-box-binding protein (205 aa).

2 consecutive repeat copies span residues 27–103 (LQNI…ARII) and 117–194 (IQNI…YPVL).

This sequence belongs to the TBP family. As to quaternary structure, belongs to the TFIID complex together with the TBP-associated factors (TAFs). Binds DNA as monomer.

The protein localises to the nucleus. Functionally, general transcription factor that functions at the core of the DNA-binding multiprotein factor TFIID. Binding of TFIID to the TATA box is the initial transcriptional step of the pre-initiation complex (PIC), playing a role in the activation of eukaryotic genes transcribed by RNA polymerase II. The chain is TATA-box-binding protein (tbpA) from Dictyostelium discoideum (Social amoeba).